A 304-amino-acid polypeptide reads, in one-letter code: CBY1-interacting BAR domain-containing protein 2 (304 aa).

Positions 6-217 are BAR-like; it reads SRDSQVRVME…EKYDLERDLL (212 aa).

The protein belongs to the CIBAR family. As to quaternary structure, homodimer (via BAR-like domain). Heterodimer (via BAR-like domain) with FAM92A. Interacts with CBY1. As to expression, restricted to certain tissues, most prominently expressed in multicilaited tissues.

The protein resides in the cytoplasm. It localises to the cytoskeleton. It is found in the microtubule organizing center. Its subcellular location is the centrosome. The protein localises to the centriole. The protein resides in the cilium basal body. May play a role in ciliogenesis. In cooperation with CBY1 may facilitate ciliogenesis likely by the recruitment and fusion of endosomal vesicles at distal appendages during early stages of ciliogenesis. The protein is CBY1-interacting BAR domain-containing protein 2 of Homo sapiens (Human).